Reading from the N-terminus, the 761-residue chain is Isocyanide synthase xanB (761 aa).

The interval 24 to 128 is disordered; that stretch reads LLGSYETKAP…GKGTKADPSH (105 aa). The segment covering 36-48 has biased composition (low complexity); sequence ETSEIAASSSSSE. Polar residues predominate over residues 93–102; it reads TVSTPQSSDN. Positions 115–126 are enriched in basic and acidic residues; sequence FKDEGKGTKADP.

Belongs to the isocyanide synthase family.

The protein operates within secondary metabolite biosynthesis. Functionally, isocyanide synthase; part of the gene cluster that mediates the biosynthesis of the isocyanide xanthocillin and its derivatives. The first step of the pathway consists in the conversion of tyrosine into a vinyl-isonitrile intermediate by the isocyanide synthase xanB. Subsequent oxidative dimerization of this intermediate to form xanthocillin may involve the cytochrome P450 monooxygenase xanG, whose expression is coregulated with that of XanB. Xanthocillin can be further modified by the isonitrile hydratase-like protein xanA which introduces N-formyl groups and the methyltransferase xanE which introduces methyl groups, leading to the production of several derivatives including fumiformamide. Finally, fumiformamide can be subject to both oxidative and reductive cyclization to yield melanocins E and F, respectively. This is Isocyanide synthase xanB from Aspergillus fumigatus (strain ATCC MYA-4609 / CBS 101355 / FGSC A1100 / Af293) (Neosartorya fumigata).